The chain runs to 323 residues: GDSL esterase/lipase At5g03980 (323 aa).

The first 21 residues, 1–21 (MSTTKALSLLVFILFVSLVHS), serve as a signal peptide directing secretion. S36 acts as the Nucleophile in catalysis. Residue N77 is glycosylated (N-linked (GlcNAc...) asparagine). Active-site residues include D294 and H297.

It belongs to the 'GDSL' lipolytic enzyme family.

The protein resides in the secreted. This Arabidopsis thaliana (Mouse-ear cress) protein is GDSL esterase/lipase At5g03980.